Consider the following 229-residue polypeptide: Uracil-DNA glycosylase (229 aa).

D67 functions as the Proton acceptor in the catalytic mechanism.

Belongs to the uracil-DNA glycosylase (UDG) superfamily. UNG family.

It is found in the cytoplasm. It catalyses the reaction Hydrolyzes single-stranded DNA or mismatched double-stranded DNA and polynucleotides, releasing free uracil.. Its function is as follows. Excises uracil residues from the DNA which can arise as a result of misincorporation of dUMP residues by DNA polymerase or due to deamination of cytosine. The chain is Uracil-DNA glycosylase from Coxiella burnetii (strain CbuK_Q154) (Coxiella burnetii (strain Q154)).